A 215-amino-acid polypeptide reads, in one-letter code: HTH-type transcriptional regulator for conjugative element R391 (215 aa).

An HTH cro/C1-type domain is found at 8-61; that stretch reads LNHALQLTGVTQSELARRIGIKQQSISQICSGKSARSRYTMQIAEALRVNAHWL. Positions 19–38 form a DNA-binding region, H-T-H motif; sequence QSELARRIGIKQQSISQICS.

May control the expression of the integrase and inhibit excision of the mobile element R391, and regulate the expression of other genes as well. The protein is HTH-type transcriptional regulator for conjugative element R391 of Providencia rettgeri.